Here is a 97-residue protein sequence, read N- to C-terminus: Osteocalcin (97 aa).

Residues M1 to T18 form the signal peptide. Residues S19 to R52 constitute a propeptide that is removed on maturation. One can recognise a Gla domain in the interval A53–G93. The Ca(2+) site is built by E63, E67, E70, and E76. Residues E63, E67, and E70 each carry the 4-carboxyglutamate modification. Residues C69 and C75 are joined by a disulfide bond.

The protein belongs to the osteocalcin/matrix Gla protein family. In terms of processing, gamma-carboxyglutamate residues are formed by vitamin K dependent carboxylation by GGCX. These residues are essential for the binding of calcium.

The protein resides in the secreted. The carboxylated form is one of the main organic components of the bone matrix, which constitutes 1-2% of the total bone protein. The carboxylated form binds strongly to apatite and calcium. The protein is Osteocalcin (bglap) of Sparus aurata (Gilthead sea bream).